The sequence spans 257 residues: Probable dihydroorotate dehydrogenase B (NAD(+)), electron transfer subunit (257 aa).

Residues 2–89 (EKPVICRIKE…RGPYGTYFEP (88 aa)) form the FAD-binding FR-type domain. Cys208, Cys213, Cys216, and Cys226 together coordinate [2Fe-2S] cluster.

Belongs to the PyrK family. Heterotetramer of 2 PyrK and 2 PyrD type B subunits. It depends on [2Fe-2S] cluster as a cofactor. Requires FAD as cofactor.

The protein operates within pyrimidine metabolism; UMP biosynthesis via de novo pathway; orotate from (S)-dihydroorotate (NAD(+) route): step 1/1. Functionally, responsible for channeling the electrons from the oxidation of dihydroorotate from the FMN redox center in the PyrD type B subunit to the ultimate electron acceptor NAD(+). This chain is Probable dihydroorotate dehydrogenase B (NAD(+)), electron transfer subunit, found in Methanocaldococcus jannaschii (strain ATCC 43067 / DSM 2661 / JAL-1 / JCM 10045 / NBRC 100440) (Methanococcus jannaschii).